A 787-amino-acid chain; its full sequence is Alpha-glucosidase 2 (787 aa).

Catalysis depends on residues Asp407 and Glu410. Asp484 acts as the Proton donor in catalysis.

It belongs to the glycosyl hydrolase 31 family. Homohexamer.

It catalyses the reaction Hydrolysis of terminal, non-reducing (1-&gt;4)-linked alpha-D-glucose residues with release of alpha-D-glucose.. This is Alpha-glucosidase 2 from Bacillus thermoamyloliquefaciens.